The primary structure comprises 273 residues: Transposable element Tcb2 transposase (273 aa).

This sequence belongs to the transposase 5 family.

The protein localises to the nucleus. In terms of biological role, probably essential for transposable element Tcb2 transposition. This Caenorhabditis briggsae protein is Transposable element Tcb2 transposase.